A 273-amino-acid chain; its full sequence is Phosphatidylglycerol--prolipoprotein diacylglyceryl transferase (273 aa).

Helical transmembrane passes span 19-39 (VHWY…LASY), 55-75 (LVFY…VLFY), 90-110 (VWTG…AMIL), 125-145 (FIAP…FIGA), 174-194 (PSQI…LWWF), 202-222 (MAVS…VEFF), and 230-250 (GFIL…MLLI). Arg138 contributes to the a 1,2-diacyl-sn-glycero-3-phospho-(1'-sn-glycerol) binding site.

Belongs to the Lgt family.

It is found in the cell inner membrane. The enzyme catalyses L-cysteinyl-[prolipoprotein] + a 1,2-diacyl-sn-glycero-3-phospho-(1'-sn-glycerol) = an S-1,2-diacyl-sn-glyceryl-L-cysteinyl-[prolipoprotein] + sn-glycerol 1-phosphate + H(+). The protein operates within protein modification; lipoprotein biosynthesis (diacylglyceryl transfer). Catalyzes the transfer of the diacylglyceryl group from phosphatidylglycerol to the sulfhydryl group of the N-terminal cysteine of a prolipoprotein, the first step in the formation of mature lipoproteins. This Acinetobacter baylyi (strain ATCC 33305 / BD413 / ADP1) protein is Phosphatidylglycerol--prolipoprotein diacylglyceryl transferase.